Reading from the N-terminus, the 163-residue chain is Small heat shock protein C4 (163 aa).

A sHSP domain is found at tyrosine 53 to serine 163.

Belongs to the small heat shock protein (HSP20) family.

This Rickettsia felis (strain ATCC VR-1525 / URRWXCal2) (Rickettsia azadi) protein is Small heat shock protein C4 (hspc4-1).